Here is a 127-residue protein sequence, read N- to C-terminus: Ribosome-binding factor A (127 aa).

The protein belongs to the RbfA family. As to quaternary structure, monomer. Binds 30S ribosomal subunits, but not 50S ribosomal subunits or 70S ribosomes.

It localises to the cytoplasm. Its function is as follows. One of several proteins that assist in the late maturation steps of the functional core of the 30S ribosomal subunit. Associates with free 30S ribosomal subunits (but not with 30S subunits that are part of 70S ribosomes or polysomes). Required for efficient processing of 16S rRNA. May interact with the 5'-terminal helix region of 16S rRNA. The protein is Ribosome-binding factor A of Rickettsia typhi (strain ATCC VR-144 / Wilmington).